The chain runs to 217 residues: Small ribosomal subunit protein uS3 (217 aa).

Residues 40–110 form the KH type-2 domain; it reads IRDLINNSFN…EVYINIHEVR (71 aa).

Belongs to the universal ribosomal protein uS3 family. Part of the 30S ribosomal subunit. Forms a tight complex with proteins S10 and S14.

In terms of biological role, binds the lower part of the 30S subunit head. Binds mRNA in the 70S ribosome, positioning it for translation. In Rickettsia canadensis (strain McKiel), this protein is Small ribosomal subunit protein uS3.